A 283-amino-acid polypeptide reads, in one-letter code: MEMO1 family protein DKAM_1357 (283 aa).

The protein belongs to the MEMO1 family.

This chain is MEMO1 family protein DKAM_1357, found in Desulfurococcus amylolyticus (strain DSM 18924 / JCM 16383 / VKM B-2413 / 1221n) (Desulfurococcus kamchatkensis).